The primary structure comprises 260 residues: 3-oxoadipate CoA-transferase subunit B (260 aa).

Glutamate 51 is an active-site residue.

It belongs to the 3-oxoacid CoA-transferase subunit B family. Heterotetramer composed of 2 A and 2 B subunits.

The catalysed reaction is 3-oxoadipate + succinyl-CoA = 3-oxoadipyl-CoA + succinate. It participates in aromatic compound metabolism; beta-ketoadipate pathway; acetyl-CoA and succinyl-CoA from 3-oxoadipate: step 1/2. In Pseudomonas knackmussii (strain DSM 6978 / CCUG 54928 / LMG 23759 / B13), this protein is 3-oxoadipate CoA-transferase subunit B (catJ).